Consider the following 324-residue polypeptide: Formimidoylglutamase (324 aa).

The Mn(2+) site is built by H124, D153, H155, D157, D245, and D247.

It belongs to the arginase family. It depends on Mn(2+) as a cofactor.

It carries out the reaction N-formimidoyl-L-glutamate + H2O = formamide + L-glutamate. The protein operates within amino-acid degradation; L-histidine degradation into L-glutamate; L-glutamate from N-formimidoyl-L-glutamate (hydrolase route): step 1/1. Its function is as follows. Catalyzes the conversion of N-formimidoyl-L-glutamate to L-glutamate and formamide. The sequence is that of Formimidoylglutamase from Hahella chejuensis (strain KCTC 2396).